Reading from the N-terminus, the 117-residue chain is Large ribosomal subunit protein bL20c (117 aa).

The protein belongs to the bacterial ribosomal protein bL20 family.

The protein localises to the plastid. The protein resides in the chloroplast. Its function is as follows. Binds directly to 23S ribosomal RNA and is necessary for the in vitro assembly process of the 50S ribosomal subunit. It is not involved in the protein synthesizing functions of that subunit. The chain is Large ribosomal subunit protein bL20c from Calycanthus floridus var. glaucus (Eastern sweetshrub).